The primary structure comprises 530 residues: Membrane-associated transporter protein (530 aa).

Over 1 to 45 the chain is Cytoplasmic; it reads MSGSNGPTDTHTYQSLAEDCPFGSVEQPKRSTGRLVMHSMAMFGR. Residues 46–66 form a helical membrane-spanning segment; the sequence is EFCYAVEAAYVTPVLLSVGLP. Over 67 to 68 the chain is Extracellular; sequence KS. Residues 69-89 traverse the membrane as a helical segment; that stretch reads LYSMVWLLSPILGFLLQPVVG. At 90 to 105 the chain is on the cytoplasmic side; sequence SASDHCRARWGRRRPY. Residues 106 to 126 form a helical membrane-spanning segment; the sequence is ILTLAIMMLLGMALYLNGDAV. Residues 127-138 are Extracellular-facing; that stretch reads VSALVANPRQKL. Residues 139–159 traverse the membrane as a helical segment; the sequence is IWAISITMVGVVLFDFSADFI. Residues 160–184 are Cytoplasmic-facing; sequence DGPIKAYLFDVCSHQDKEKGLHYHA. Residues 185 to 205 traverse the membrane as a helical segment; that stretch reads LFTGFGGALGYILGAIDWVHL. Topologically, residues 206–216 are extracellular; the sequence is DLGRLLGTEFQ. The chain crosses the membrane as a helical span at residues 217–237; the sequence is VMFFFSALVLILCFITHLCSI. At 238-318 the chain is on the cytoplasmic side; sequence PEAPLRDAAT…ALVNMPSHYR (81 aa). The interval 275–299 is disordered; sequence KNGGADTEQPVQEWKNKKPSGQSQR. Residues 319 to 339 form a helical membrane-spanning segment; sequence CLCVSHLIGWTAFLSNMLFFT. Residues 340-366 are Extracellular-facing; the sequence is DFMGQIVYHGDPYGAHNSTEFLIYERG. The N-linked (GlcNAc...) asparagine glycan is linked to Asn356. Residues 367-387 traverse the membrane as a helical segment; the sequence is VEVGCWGLCINSVFSSVYSYF. At 388-398 the chain is on the cytoplasmic side; sequence QKAMVSYIGLK. The chain crosses the membrane as a helical span at residues 399–419; that stretch reads GLYFMGYLLFGLGTGFIGLFP. The Extracellular portion of the chain corresponds to 420-425; the sequence is NVYSTL. Residues 426–446 traverse the membrane as a helical segment; sequence VLCSMFGVMSSTLYTVPFNLI. Over 447 to 477 the chain is Cytoplasmic; sequence AEYHREEEKEKGQEAPGGPDNQGRGKGVDCA. A helical transmembrane segment spans residues 478 to 498; it reads ALTCMVQLAQILVGGGLGFLV. Residues 499-504 are Extracellular-facing; the sequence is NMAGSV. Residues 505–525 traverse the membrane as a helical segment; it reads VVVVITASAVSLIGCCFVALF. Residues 526–530 lie on the Cytoplasmic side of the membrane; the sequence is VRYVD.

The protein belongs to the glycoside-pentoside-hexuronide (GPH) cation symporter transporter (TC 2.A.2) family. In terms of assembly, interacts with TYRP1. In terms of tissue distribution, mainly expressed in eyeballs and skin melanocytes. Also detected in kidney, colon, gall bladder and pancreas.

Its subcellular location is the melanosome membrane. It catalyses the reaction sucrose(out) + H(+)(out) = sucrose(in) + H(+)(in). The catalysed reaction is D-glucose(out) + H(+)(out) = D-glucose(in) + H(+)(in). Its function is as follows. Proton-associated glucose and sucrose transporter. May be able to transport also fructose. Expressed at a late melanosome maturation stage where functions as a proton/glucose exporter which increase lumenal pH by decreasing glycolysis. Regulates melanogenesis by maintaining melanosome neutralization that is initially initiated by transient OCA2 and required for a proper function of the tyrosinase TYR. The protein is Membrane-associated transporter protein (Slc45a2) of Mus musculus (Mouse).